A 253-amino-acid polypeptide reads, in one-letter code: ER membrane protein complex subunit 3 (253 aa).

Helical transmembrane passes span Trp-10–Met-30, Phe-126–Met-146, and Ser-176–Leu-196.

Belongs to the EMC3 family. As to quaternary structure, component of the ER membrane protein complex (EMC), which is composed of EMC1, EMC2, EMC3, EMC4, EMC5 and EMC6.

It localises to the endoplasmic reticulum membrane. Its function is as follows. The EMC seems to be required for efficient folding of proteins in the endoplasmic reticulum (ER). The polypeptide is ER membrane protein complex subunit 3 (AIM27) (Saccharomyces cerevisiae (strain YJM789) (Baker's yeast)).